Here is a 396-residue protein sequence, read N- to C-terminus: dTDP-epi-vancosaminyltransferase (396 aa).

10–12 (SRG) contributes to the dTDP-beta-L-4-epi-vancosamine binding site. 4 residues coordinate devancoaminyl-vancomycin: aspartate 127, glutamine 133, tyrosine 141, and tyrosine 169. DTDP-beta-L-4-epi-vancosamine-binding positions include arginine 207, serine 230, 277–278 (EV), and 293–298 (HDSAGT).

The protein belongs to the glycosyltransferase 28 family.

The catalysed reaction is dTDP-beta-L-4-epi-vancosamine + devancoaminyl-vancomycin = chloroorienticin B + dTDP + H(+). It functions in the pathway antibiotic biosynthesis; vancomycin biosynthesis. Catalyzes the attachment of 4-epi-vancosamine from a TDP donor to the beta-OH-Tyr-6 of the aglycone cosubstrate in the biosynthesis of glycopeptide antibiotic chloroeremomycin, a member of the vancomycin group of antibiotics. Strongly prefers devancoaminyl-vancomycin (DVV) as substrate rather than the heptapeptide vancomycin aglycone (AGV). Acts downstream of GtfB. The protein is dTDP-epi-vancosaminyltransferase (gtfA) of Amycolatopsis orientalis (Nocardia orientalis).